The sequence spans 643 residues: Zinc finger protein 64 (643 aa).

C2H2-type zinc fingers lie at residues 173 to 195 (HKCEVCGKCFSRKDKLKTHMRCH), 201 to 223 (YKCKTCDYAAADSSSLNKHLRIH), 229 to 251 (FKCQICPYASRNSSQLTVHLRSH), 297 to 322 (FNCRYPGCHFKTVHGMKDLDRHLRIH), 328 to 350 (HKCEFCDKCFSRKDNLTMHMRCH), 356 to 378 (HKCHLCDYAAVDSSSLKKHLRIH), 384 to 406 (YKCQLCPYASRNSSQLTVHLRSH), 412 to 434 (FQCWLCSAKFKISSDLKRHMIVH), 440 to 463 (FKCEFCDVRCTMKANLKSHIRIKH), 465 to 487 (FKCLHCAFQGRDRADLLEHSRLH), and 493 to 515 (EKCPECSYSCSNPAALRVHSRVH). Zn(2+) contacts are provided by cysteine 495, cysteine 498, histidine 511, histidine 515, cysteine 523, cysteine 526, histidine 539, and histidine 544. The span at 538-552 (KHIDKVHREGAKTEN) shows a compositional bias: basic and acidic residues. Residues 538–571 (KHIDKVHREGAKTENRAPPGKDGPGESGPHHVPN) form a disordered region. The segment at 578–600 (FGCDKCGASFVRDDSLRCHRKQH) adopts a C2H2-type 12 zinc-finger fold.

It belongs to the krueppel C2H2-type zinc-finger protein family. As to quaternary structure, interacts with NOTCH1. Widely expressed. Expressed in the brain, spleen, liver, and heart.

It is found in the nucleus. Its function is as follows. May be involved in the regulation of mesenchymal cell differentiation through transactivation of NOTCH1 target genes. The chain is Zinc finger protein 64 from Mus musculus (Mouse).